The sequence spans 756 residues: Conserved oligomeric Golgi complex subunit 2 (756 aa).

A coiled-coil region spans residues 62 to 82 (RSELRSHLASLNRELVDLINR). The interval 173–199 (WQNEDANSMGRSSMNDENSTQQDGTTM) is disordered.

The protein belongs to the COG2 family. As to quaternary structure, homodimer. Component of the conserved oligomeric Golgi complex which is composed of eight different subunits and is required for normal Golgi morphology and localization. Binds to COG3 and COG4. Interacts with FPP3/VETH1 and FPP2/VETH2; this interaction promotes the association between cortical microtubules and EXO70A1. Binds to SEC15B, and, possibly, with EXO70A1, SEC3A and SEC10A.

The protein localises to the golgi apparatus membrane. Functionally, required for normal Golgi morphology and function. Ensures, when in complex with FPP3/VETH1 and FPP2/VETH2, the correct secondary cell wall (SCW) deposition pattern by recruiting exocyst components to cortical microtubules in xylem cells during secondary cell wall deposition. This Arabidopsis thaliana (Mouse-ear cress) protein is Conserved oligomeric Golgi complex subunit 2.